Here is a 125-residue protein sequence, read N- to C-terminus: UPF0102 protein ABO_0585 (125 aa).

This sequence belongs to the UPF0102 family.

This Alcanivorax borkumensis (strain ATCC 700651 / DSM 11573 / NCIMB 13689 / SK2) protein is UPF0102 protein ABO_0585.